The following is a 156-amino-acid chain: Cyclic pyranopterin monophosphate synthase (156 aa).

Residues 73 to 75 (LCH) and 110 to 111 (ME) each bind substrate. The active site involves D125.

Belongs to the MoaC family. Homohexamer; trimer of dimers.

It carries out the reaction (8S)-3',8-cyclo-7,8-dihydroguanosine 5'-triphosphate = cyclic pyranopterin phosphate + diphosphate. Its pathway is cofactor biosynthesis; molybdopterin biosynthesis. Functionally, catalyzes the conversion of (8S)-3',8-cyclo-7,8-dihydroguanosine 5'-triphosphate to cyclic pyranopterin monophosphate (cPMP). This Pseudomonas putida (strain GB-1) protein is Cyclic pyranopterin monophosphate synthase.